The following is a 337-amino-acid chain: GTP 3',8-cyclase (337 aa).

Residues 17-243 (PFQRQYYYLR…HKSHTDGPAK (227 aa)) enclose the Radical SAM core domain. Arg-26 contacts GTP. [4Fe-4S] cluster is bound by residues Cys-33 and Cys-37. An S-adenosyl-L-methionine-binding site is contributed by Tyr-39. A [4Fe-4S] cluster-binding site is contributed by Cys-40. GTP is bound at residue Arg-76. An S-adenosyl-L-methionine-binding site is contributed by Gly-80. A GTP-binding site is contributed by Thr-107. Ser-131 contributes to the S-adenosyl-L-methionine binding site. Lys-168 is a binding site for GTP. S-adenosyl-L-methionine is bound at residue Met-202. [4Fe-4S] cluster is bound by residues Cys-265 and Cys-268. 270 to 272 (RLR) is a GTP binding site. Cys-282 is a [4Fe-4S] cluster binding site.

The protein belongs to the radical SAM superfamily. MoaA family. Monomer and homodimer. It depends on [4Fe-4S] cluster as a cofactor.

The enzyme catalyses GTP + AH2 + S-adenosyl-L-methionine = (8S)-3',8-cyclo-7,8-dihydroguanosine 5'-triphosphate + 5'-deoxyadenosine + L-methionine + A + H(+). It participates in cofactor biosynthesis; molybdopterin biosynthesis. In terms of biological role, catalyzes the cyclization of GTP to (8S)-3',8-cyclo-7,8-dihydroguanosine 5'-triphosphate. The sequence is that of GTP 3',8-cyclase from Haemophilus influenzae (strain PittEE).